The primary structure comprises 599 residues: BICD family-like cargo adapter 1 (599 aa).

The interval 1–27 is disordered; that stretch reads MELPISFLSDSSRPAASSERGDQAALG. Residues 76-80 carry the CC1 box motif; sequence AARLG. Residues 80–341 are a coiled coil; the sequence is GKALLERNQD…WEAHCQVRSL (262 aa). The interval 352–375 is disordered; that stretch reads DSAVSTDSSMDESSETSSAKDVPA. Residues 405–536 are a coiled coil; that stretch reads EDDGLEEQIK…LEAWQDDMHR (132 aa).

This sequence belongs to the BICDR family. As to quaternary structure, part of a tripartite complex with dynein and dynactin, acts an adapter linking the dynein motor complex and dynactin. Interacts with KIF1C. Interacts with RAB6A and RAB6B; interaction is specific to Rab6.

The protein resides in the cytoplasm. It is found in the cytoskeleton. It localises to the microtubule organizing center. The protein localises to the centrosome. Functionally, acts as an adapter protein linking the dynein motor complex to various cargos and converts dynein from a non-processive to a highly processive motor in the presence of dynactin. Facilitates the interaction between dynein and dynactin and activates dynein processivity (the ability to move along a microtubule for a long distance without falling off the track). Predominantly recruits 2 dyneins, which increases both the force and speed of the microtubule motor. Component of secretory vesicle machinery in developing neurons that acts as a regulator of neurite outgrowth. Regulates the secretory vesicle transport by controlling the accumulation of Rab6-containing secretory vesicles in the pericentrosomal region restricting anterograde secretory transport during the early phase of neuronal differentiation, thereby inhibiting neuritogenesis. In Xenopus tropicalis (Western clawed frog), this protein is BICD family-like cargo adapter 1 (bicdl1).